The following is a 124-amino-acid chain: Large ribosomal subunit protein bL21 (124 aa).

Belongs to the bacterial ribosomal protein bL21 family. As to quaternary structure, part of the 50S ribosomal subunit. Contacts protein L20.

Its function is as follows. This protein binds to 23S rRNA in the presence of protein L20. The polypeptide is Large ribosomal subunit protein bL21 (Synechococcus sp. (strain WH7803)).